A 293-amino-acid polypeptide reads, in one-letter code: Small ribosomal subunit protein uS2m (293 aa).

The segment covering 21–38 (GRAAQRGRTLGSAAAAAA) has biased composition (low complexity). Disordered stretches follow at residues 21-49 (GRAA…DRSA) and 263-293 (QGAP…GHSP). The span at 39 to 49 (REPERDSDRSA) shows a compositional bias: basic and acidic residues. The segment covering 267-279 (GPHPANPAAPGAP) has biased composition (pro residues).

This sequence belongs to the universal ribosomal protein uS2 family. As to quaternary structure, component of the mitochondrial ribosome small subunit (28S) which comprises a 12S rRNA and about 30 distinct proteins.

Its subcellular location is the mitochondrion. Functionally, required for mitoribosome formation and stability, and mitochondrial translation. This chain is Small ribosomal subunit protein uS2m (MRPS2), found in Bos taurus (Bovine).